Reading from the N-terminus, the 309-residue chain is Foldase protein PrsA 2 (309 aa).

A signal peptide spans 1-20 (MKYRLIGVGASLVVAVMLTG). The N-palmitoyl cysteine moiety is linked to residue Cys-21. Cys-21 is lipidated: S-diacylglycerol cysteine. The region spanning 137–232 (MPMTTVQHIA…TADTKDKPTY (96 aa)) is the PpiC domain.

This sequence belongs to the PrsA family.

The protein localises to the cell membrane. It carries out the reaction [protein]-peptidylproline (omega=180) = [protein]-peptidylproline (omega=0). Its function is as follows. Plays a major role in protein secretion by helping the post-translocational extracellular folding of several secreted proteins. This Lactiplantibacillus plantarum (strain ATCC BAA-793 / NCIMB 8826 / WCFS1) (Lactobacillus plantarum) protein is Foldase protein PrsA 2 (prsA2).